Here is a 726-residue protein sequence, read N- to C-terminus: Transcription factor 12 (726 aa).

Disordered regions lie at residues 27–75 (SPPV…SRGF), 89–223 (LVSH…TFFD), 243–267 (YGGM…HSHD), 289–309 (SSFH…HTPP), 345–367 (PDHT…SPLA), 380–409 (TASG…YENS), 501–532 (MGSV…SSEL), 558–624 (VENQ…ERRM), and 694–726 (EEEK…MGHL). Polar residues predominate over residues 29–47 (PVNSGKNRPTTLGSSQFTA). Over residues 55 to 74 (SQASWASGGQSSPSFESSRG) the composition is skewed to low complexity. 3 stretches are compositionally biased toward polar residues: residues 145–157 (PGKS…SYTG), 249–263 (GSSS…YSNL), and 291–309 (FHRS…HTPP). Residues 348–359 (TSSSFPSNPSTP) show a composition bias toward low complexity. 2 stretches are compositionally biased toward polar residues: residues 389-409 (GTTQ…YENS) and 510-532 (GSLN…SSEL). A compositionally biased stretch (basic and acidic residues) spans 559–575 (ENQDKDDMHDSHASDDL). Over residues 592–603 (SSRPSCELSCSS) the composition is skewed to low complexity. The segment covering 612 to 624 (PEQKAERERERRM) has biased composition (basic and acidic residues). Residues 621–674 (ERRMANNARERLRVRDINEAFKELGRMCQLHLKSEKPQTKLLILHQAVAVILSL) form the bHLH domain. Residues 676–699 (QQVRERNLNPKAACLKRREEEKVS) form a class A specific domain region. The segment covering 717 to 726 (TDTSNPMGHL) has biased composition (polar residues).

Efficient DNA binding requires dimerization with another bHLH protein.

Its subcellular location is the nucleus. Functionally, transcriptional regulator. Involved in the initiation of neuronal differentiation. Activates transcription by binding to the E box (5'-CANNTG-3'). May be involved in the functional network that regulates the development of the GnRH axis. In Danio rerio (Zebrafish), this protein is Transcription factor 12 (tcf12).